We begin with the raw amino-acid sequence, 647 residues long: Pollen receptor-like kinase 2 (647 aa).

The N-terminal stretch at 1 to 21 is a signal peptide; sequence MESKCLMFVSIVSVFFMVVNG. 5 LRR repeats span residues 87–109, 110–134, 136–159, 161–183, and 185–203; these read LNSL…EFKK, LVAL…AFDG, GWLK…LVKS, KLIE…RHHP, and MLNL…SFST. Residues 248 to 268 form a helical membrane-spanning segment; the sequence is IVAAAVAALAASLIIIGVVIF. Residues 338-613 form the Protein kinase domain; it reads KASAEILGSG…EAVEKMEDLM (276 aa). Residue S340 is modified to Phosphoserine. Residues 344 to 352 and K366 each bind ATP; that span reads LGSGCFGAS. S418 carries the post-translational modification Phosphoserine. T438 bears the Phosphothreonine mark. Position 508 is a phosphotyrosine (Y508). Residues 620–647 form a disordered region; the sequence is DDDFYSTYASEADGRSSRGLSSEGINLS. Over residues 637 to 647 the composition is skewed to polar residues; that stretch reads RGLSSEGINLS.

The protein belongs to the protein kinase superfamily. Ser/Thr protein kinase family. Part of a complex containing ROPGEF1 and ARAC11/ROP1. The interaction between PRK2, ROPGEF1 and ARAC11/ROP1 is phosphorylation-independent. Interacts with ROPGEF12 (via C-terminus). Interacts with ROPGEF1 (via PRONE domain). Expressed in pollen and/or in flowers, but not in leaves. Expressed in pollen tube.

It localises to the cell membrane. The catalysed reaction is L-seryl-[protein] + ATP = O-phospho-L-seryl-[protein] + ADP + H(+). The enzyme catalyses L-threonyl-[protein] + ATP = O-phospho-L-threonyl-[protein] + ADP + H(+). Its activity is regulated as follows. The phosphorylation activity is calcium-independent. In terms of biological role, receptor-like kinase involved in the control of pollen germination and pollen tube polar growth. Phosphorylates ROPGEF1 in its C-terminal region, releasing its auto-inhibition, and thereby activating the ROP1 signaling pathway. May act as a scaffolding protein, recruiting ROPGEF12 to the plasma membrane by binding to its C-terminal domain. Phosphorylates ROPGEF12, releasing its auto-inhibition. This is Pollen receptor-like kinase 2 from Arabidopsis thaliana (Mouse-ear cress).